The sequence spans 233 residues: Large ribosomal subunit protein uL1 (233 aa).

It belongs to the universal ribosomal protein uL1 family. In terms of assembly, part of the 50S ribosomal subunit.

Its function is as follows. Binds directly to 23S rRNA. The L1 stalk is quite mobile in the ribosome, and is involved in E site tRNA release. In terms of biological role, protein L1 is also a translational repressor protein, it controls the translation of the L11 operon by binding to its mRNA. This Shewanella denitrificans (strain OS217 / ATCC BAA-1090 / DSM 15013) protein is Large ribosomal subunit protein uL1.